Consider the following 101-residue polypeptide: MSVIYNKDPRDVIIRPVVSEKSYGLIDEGKYTFQVDPSANKTEIKYAIEHIFGVKVASVNTLNRPGKRKRTRFGWGQRKATKRAVVSLREGSIDIFGGPLS.

Belongs to the universal ribosomal protein uL23 family. In terms of assembly, part of the 50S ribosomal subunit. Contacts protein L29, and trigger factor when it is bound to the ribosome.

Functionally, one of the early assembly proteins it binds 23S rRNA. One of the proteins that surrounds the polypeptide exit tunnel on the outside of the ribosome. Forms the main docking site for trigger factor binding to the ribosome. The polypeptide is Large ribosomal subunit protein uL23 (Kocuria rhizophila (strain ATCC 9341 / DSM 348 / NBRC 103217 / DC2201)).